The sequence spans 202 residues: Segregation and condensation protein B (202 aa).

It belongs to the ScpB family. In terms of assembly, homodimer. Homodimerization may be required to stabilize the binding of ScpA to the Smc head domains. Component of a cohesin-like complex composed of ScpA, ScpB and the Smc homodimer, in which ScpA and ScpB bind to the head domain of Smc. The presence of the three proteins is required for the association of the complex with DNA.

Its subcellular location is the cytoplasm. Participates in chromosomal partition during cell division. May act via the formation of a condensin-like complex containing Smc and ScpA that pull DNA away from mid-cell into both cell halves. The polypeptide is Segregation and condensation protein B (Clostridium acetobutylicum (strain ATCC 824 / DSM 792 / JCM 1419 / IAM 19013 / LMG 5710 / NBRC 13948 / NRRL B-527 / VKM B-1787 / 2291 / W)).